The primary structure comprises 634 residues: Threonine--tRNA ligase (634 aa).

The TGS domain occupies 1 to 61 (MINIRFPDGS…NSNCELRLIT (61 aa)). The catalytic stretch occupies residues 241 to 532 (DHRKIGKVLD…LIEHYAGNLP (292 aa)). Residues C332, H383, and H509 each coordinate Zn(2+).

Belongs to the class-II aminoacyl-tRNA synthetase family. Homodimer. Zn(2+) is required as a cofactor.

It is found in the cytoplasm. The enzyme catalyses tRNA(Thr) + L-threonine + ATP = L-threonyl-tRNA(Thr) + AMP + diphosphate + H(+). In terms of biological role, catalyzes the attachment of threonine to tRNA(Thr) in a two-step reaction: L-threonine is first activated by ATP to form Thr-AMP and then transferred to the acceptor end of tRNA(Thr). Also edits incorrectly charged L-seryl-tRNA(Thr). The polypeptide is Threonine--tRNA ligase (Francisella tularensis subsp. holarctica (strain FTNF002-00 / FTA)).